The sequence spans 88 residues: Small ribosomal subunit protein uS15 (88 aa).

The segment at 1 to 23 is disordered; sequence MIASSVKAEVVKSNARSANDTGS. Over residues 14-23 the composition is skewed to polar residues; sequence NARSANDTGS.

The protein belongs to the universal ribosomal protein uS15 family. In terms of assembly, part of the 30S ribosomal subunit. Forms a bridge to the 50S subunit in the 70S ribosome, contacting the 23S rRNA.

Functionally, one of the primary rRNA binding proteins, it binds directly to 16S rRNA where it helps nucleate assembly of the platform of the 30S subunit by binding and bridging several RNA helices of the 16S rRNA. In terms of biological role, forms an intersubunit bridge (bridge B4) with the 23S rRNA of the 50S subunit in the ribosome. The polypeptide is Small ribosomal subunit protein uS15 (Delftia acidovorans (strain DSM 14801 / SPH-1)).